The following is a 525-amino-acid chain: uncharacterized protein (525 aa).

A signal peptide spans 1–21 (MLECLSALLVLFAGGGGSVLA). Residues 22 to 448 (AVQSKTVADP…ISAASQLDKR (427 aa)) are Extracellular-facing. The segment at 242–264 (KVSSENCSKDTDDKSGSKKERNT) is disordered. The chain crosses the membrane as a helical span at residues 449 to 469 (IFIFTAITVSITTLMMLGFSY). The Cytoplasmic portion of the chain corresponds to 470 to 525 (RSRVSFRDHSIDDSDDDNDWSDDEVEFDEEYFYSLPVSIPEKGISLDKMAQQLGVE).

It is found in the membrane. This is an uncharacterized protein from Saccharomyces cerevisiae (strain ATCC 204508 / S288c) (Baker's yeast).